The primary structure comprises 483 residues: Uroporphyrinogen-III C-methyltransferase (483 aa).

This sequence belongs to the precorrin methyltransferase family.

The catalysed reaction is uroporphyrinogen III + 2 S-adenosyl-L-methionine = precorrin-2 + 2 S-adenosyl-L-homocysteine + H(+). This chain is Uroporphyrinogen-III C-methyltransferase (nasF), found in Bacillus subtilis (strain 168).